A 279-amino-acid polypeptide reads, in one-letter code: Large ribosomal subunit protein uL2 (279 aa).

Residues 223–279 are disordered; the sequence is MAMNPVDHPMGGGEGKSKSGGGRKHPKSPWGQLAKGLKTRNKKKASTKLIVRGRKAK. A compositionally biased stretch (gly residues) spans 232 to 242; that stretch reads MGGGEGKSKSG. Residues 259-279 are compositionally biased toward basic residues; that stretch reads LKTRNKKKASTKLIVRGRKAK.

The protein belongs to the universal ribosomal protein uL2 family. Part of the 50S ribosomal subunit. Forms a bridge to the 30S subunit in the 70S ribosome.

Its function is as follows. One of the primary rRNA binding proteins. Required for association of the 30S and 50S subunits to form the 70S ribosome, for tRNA binding and peptide bond formation. It has been suggested to have peptidyltransferase activity; this is somewhat controversial. Makes several contacts with the 16S rRNA in the 70S ribosome. The chain is Large ribosomal subunit protein uL2 from Chlorobaculum tepidum (strain ATCC 49652 / DSM 12025 / NBRC 103806 / TLS) (Chlorobium tepidum).